Here is a 264-residue protein sequence, read N- to C-terminus: S-adenosylmethionine decarboxylase proenzyme (264 aa).

Catalysis depends on Ser112, which acts as the Schiff-base intermediate with substrate; via pyruvic acid. Ser112 carries the post-translational modification Pyruvic acid (Ser); by autocatalysis. His117 (proton acceptor; for processing activity) is an active-site residue. The active-site Proton donor; for catalytic activity is the Cys140.

It belongs to the prokaryotic AdoMetDC family. Type 2 subfamily. Heterooctamer of four alpha and four beta chains arranged as a tetramer of alpha/beta heterodimers. Pyruvate is required as a cofactor. In terms of processing, is synthesized initially as an inactive proenzyme. Formation of the active enzyme involves a self-maturation process in which the active site pyruvoyl group is generated from an internal serine residue via an autocatalytic post-translational modification. Two non-identical subunits are generated from the proenzyme in this reaction, and the pyruvate is formed at the N-terminus of the alpha chain, which is derived from the carboxyl end of the proenzyme. The post-translation cleavage follows an unusual pathway, termed non-hydrolytic serinolysis, in which the side chain hydroxyl group of the serine supplies its oxygen atom to form the C-terminus of the beta chain, while the remainder of the serine residue undergoes an oxidative deamination to produce ammonia and the pyruvoyl group blocking the N-terminus of the alpha chain.

The enzyme catalyses S-adenosyl-L-methionine + H(+) = S-adenosyl 3-(methylsulfanyl)propylamine + CO2. Its pathway is amine and polyamine biosynthesis; S-adenosylmethioninamine biosynthesis; S-adenosylmethioninamine from S-adenosyl-L-methionine: step 1/1. Functionally, catalyzes the decarboxylation of S-adenosylmethionine to S-adenosylmethioninamine (dcAdoMet), the propylamine donor required for the synthesis of the polyamines spermine and spermidine from the diamine putrescine. This Pectobacterium atrosepticum (strain SCRI 1043 / ATCC BAA-672) (Erwinia carotovora subsp. atroseptica) protein is S-adenosylmethionine decarboxylase proenzyme.